The sequence spans 344 residues: Phenylalanine--tRNA ligase alpha subunit (344 aa).

Residue Glu-258 participates in Mg(2+) binding.

Belongs to the class-II aminoacyl-tRNA synthetase family. Phe-tRNA synthetase alpha subunit type 1 subfamily. As to quaternary structure, tetramer of two alpha and two beta subunits. Requires Mg(2+) as cofactor.

Its subcellular location is the cytoplasm. The catalysed reaction is tRNA(Phe) + L-phenylalanine + ATP = L-phenylalanyl-tRNA(Phe) + AMP + diphosphate + H(+). The polypeptide is Phenylalanine--tRNA ligase alpha subunit (Thiobacillus denitrificans (strain ATCC 25259 / T1)).